The chain runs to 878 residues: Indoleacetate decarboxylase (878 aa).

The 709-residue stretch at 42–750 folds into the PFL domain; it reads DRTKRMKERF…VTGATPDGRL (709 aa). The Cysteine radical intermediate role is filled by Cys500. The active-site Proton acceptor is Glu502. The Glycine radical domain occupies 758-878; that stretch reads GILSASPGTD…VIARTEYDAL (121 aa). Gly853 carries the glycine radical modification.

It belongs to the glycyl radical enzyme (GRE) family. In terms of assembly, homodimer (predominantly) and monomer. In terms of processing, requires the activating protein OsIADAE to generate the key active site glycyl radical on Gly-853 that is involved in catalysis.

It catalyses the reaction (indol-3-yl)acetate + H(+) = skatole + CO2. It participates in amino-acid degradation. In terms of biological role, glycyl radical enzyme that catalyzes the terminal step of tryptophan fermentation, the decarboxylation of indoleacetate to form skatole, a malodorous compound that contributes to the characteristic smell of animal feces. No activity is detected with phenylacetate or p-hydroxyphenylacetate as substrates, indicating high substrate specificity. The protein is Indoleacetate decarboxylase of Tractidigestivibacter scatoligenes (Olsenella scatoligenes).